We begin with the raw amino-acid sequence, 160 residues long: Cytochrome b6-f complex subunit 4 (160 aa).

Transmembrane regions (helical) follow at residues 36–56 (LLYI…GLAV), 95–115 (LLGV…PFLE), and 131–151 (TVFL…TLPI).

Belongs to the cytochrome b family. PetD subfamily. The 4 large subunits of the cytochrome b6-f complex are cytochrome b6, subunit IV (17 kDa polypeptide, petD), cytochrome f and the Rieske protein, while the 4 small subunits are petG, petL, petM and petN. The complex functions as a dimer.

The protein resides in the plastid. It localises to the chloroplast thylakoid membrane. Functionally, component of the cytochrome b6-f complex, which mediates electron transfer between photosystem II (PSII) and photosystem I (PSI), cyclic electron flow around PSI, and state transitions. In Lotus japonicus (Lotus corniculatus var. japonicus), this protein is Cytochrome b6-f complex subunit 4.